We begin with the raw amino-acid sequence, 558 residues long: Glypican-1 (558 aa).

Positions 1–23 (MELRARGWWLLCAAAALVACTRG) are cleaved as a signal peptide. 7 disulfide bridges follow: C32–C68, C62–C256, C69–C259, C191–C343, C246–C279, C268–C415, and C272–C401. N-linked (GlcNAc...) asparagine glycosylation is found at N79 and N116. The segment at 478 to 531 (FQDASDDGSGSGSGGGCPDDACGRRVSKKSSSSRTPLIHALPGLSEQEGQKTSA) is disordered. 3 O-linked (Xyl...) (heparan sulfate) serine glycosylation sites follow: S486, S488, and S490. The GPI-anchor amidated serine moiety is linked to residue S530. The propeptide at 531-558 (AATRPEPHYFFLLFLFTLVLAAARPRWR) is removed in mature form.

The protein belongs to the glypican family. Post-translationally, S-nitrosylated in a Cu(2+)-dependent manner. Nitric acid (NO) is released from the nitrosylated cysteines by ascorbate or by some other reducing agent, in a Cu(2+) or Zn(2+) dependent manner. This free nitric oxide is then capable of cleaving the heparan sulfate side chains. In terms of processing, N- and O-glycosylated. N-glycosylation is mainly of the complex type containing sialic acid. O-glycosylated with heparan sulfate. The heparan sulfate chains can be cleaved either by the action of heparanase or, degraded by a deaminative process that uses nitric oxide (NO) released from the S-nitrosylated cysteines. This process is triggered by ascorbate, or by some other reducing agent, in a Cu(2+)- or Zn(2+) dependent manner. Cu(2+) ions are provided by ceruloproteins such as APP, PRNP or CP which associate with GCP1 in intracellular compartments or lipid rafts. This cell-associated glypican is further processed to give rise to a medium-released species. In terms of tissue distribution, nervous system.

Its subcellular location is the cell membrane. It localises to the endosome. The protein resides in the secreted. The protein localises to the extracellular space. Its function is as follows. Cell surface proteoglycan that bears heparan sulfate. May act as a catalyst in increasing the rate of conversion of prion protein PRPN(C) to PRNP(Sc) via associating (via the heparan sulfate side chains) with both forms of PRPN, targeting them to lipid rafts and facilitating their interaction. Required for proper skeletal muscle differentiation by sequestering FGF2 in lipid rafts preventing its binding to receptors (FGFRs) and inhibiting the FGF-mediated signaling. Binds Cu(2+) or Zn(2+) ions. Binds, via the heparan sulfate side chains, alpha-4 (V) collagen and participates in Schwann cell myelination. The polypeptide is Glypican-1 (Gpc1) (Rattus norvegicus (Rat)).